The chain runs to 536 residues: L-aspartate oxidase 2 (536 aa).

Residues 22 to 25 (EGLA) and 51 to 58 (SSYWAQGG) contribute to the FAD site. Residue Arg284 is the Proton donor/acceptor of the active site. Residues Glu369 and 385-386 (SL) contribute to the FAD site.

Belongs to the FAD-dependent oxidoreductase 2 family. NadB subfamily. FAD serves as cofactor.

The protein localises to the cytoplasm. It carries out the reaction L-aspartate + O2 = iminosuccinate + H2O2. Its pathway is cofactor biosynthesis; NAD(+) biosynthesis; iminoaspartate from L-aspartate (oxidase route): step 1/1. Catalyzes the oxidation of L-aspartate to iminoaspartate, the first step in the de novo biosynthesis of NAD(+). The sequence is that of L-aspartate oxidase 2 (nadB2) from Ralstonia nicotianae (strain ATCC BAA-1114 / GMI1000) (Ralstonia solanacearum).